Reading from the N-terminus, the 477-residue chain is Aspartyl/glutamyl-tRNA(Asn/Gln) amidotransferase subunit B (477 aa).

It belongs to the GatB/GatE family. GatB subfamily. In terms of assembly, heterotrimer of A, B and C subunits.

It catalyses the reaction L-glutamyl-tRNA(Gln) + L-glutamine + ATP + H2O = L-glutaminyl-tRNA(Gln) + L-glutamate + ADP + phosphate + H(+). The enzyme catalyses L-aspartyl-tRNA(Asn) + L-glutamine + ATP + H2O = L-asparaginyl-tRNA(Asn) + L-glutamate + ADP + phosphate + 2 H(+). Allows the formation of correctly charged Asn-tRNA(Asn) or Gln-tRNA(Gln) through the transamidation of misacylated Asp-tRNA(Asn) or Glu-tRNA(Gln) in organisms which lack either or both of asparaginyl-tRNA or glutaminyl-tRNA synthetases. The reaction takes place in the presence of glutamine and ATP through an activated phospho-Asp-tRNA(Asn) or phospho-Glu-tRNA(Gln). The polypeptide is Aspartyl/glutamyl-tRNA(Asn/Gln) amidotransferase subunit B (Methylobacillus flagellatus (strain ATCC 51484 / DSM 6875 / VKM B-1610 / KT)).